We begin with the raw amino-acid sequence, 266 residues long: Expansin-A13 (266 aa).

The N-terminal stretch at 1–19 (MQRFLLPLLFLALSPPAIC) is a signal peptide. The region spanning 58-171 (GGACGYGDLV…RRINCRKEGS (114 aa)) is the Expansin-like EG45 domain. Residues 181 to 260 (IFISVLITNV…NWNYGQTFEG (80 aa)) enclose the Expansin-like CBD domain.

Belongs to the expansin family. Expansin A subfamily.

The protein localises to the secreted. It is found in the cell wall. It localises to the membrane. Its function is as follows. Causes loosening and extension of plant cell walls by disrupting non-covalent bonding between cellulose microfibrils and matrix glucans. No enzymatic activity has been found. The chain is Expansin-A13 (EXPA13) from Arabidopsis thaliana (Mouse-ear cress).